A 421-amino-acid chain; its full sequence is Trimethyllysine dioxygenase, mitochondrial (421 aa).

A mitochondrion-targeting transit peptide spans 1–15 (MWYHKLLHQQSRLQN). An N6-acetyllysine mark is found at Lys-179 and Lys-236. 3 residues coordinate Fe cation: His-242, Asp-244, and His-389.

Belongs to the gamma-BBH/TMLD family. As to quaternary structure, homodimer. Fe(2+) is required as a cofactor. Requires L-ascorbate as cofactor.

The protein resides in the mitochondrion matrix. It catalyses the reaction N(6),N(6),N(6)-trimethyl-L-lysine + 2-oxoglutarate + O2 = (3S)-3-hydroxy-N(6),N(6),N(6)-trimethyl-L-lysine + succinate + CO2. It participates in amine and polyamine biosynthesis; carnitine biosynthesis. Functionally, converts trimethyllysine (TML) into hydroxytrimethyllysine (HTML). The chain is Trimethyllysine dioxygenase, mitochondrial (Tmlhe) from Rattus norvegicus (Rat).